The following is a 321-amino-acid chain: Glucokinase (321 aa).

8–13 is an ATP binding site; sequence GDVGGT.

It belongs to the bacterial glucokinase family.

It localises to the cytoplasm. The enzyme catalyses D-glucose + ATP = D-glucose 6-phosphate + ADP + H(+). This chain is Glucokinase, found in Citrobacter koseri (strain ATCC BAA-895 / CDC 4225-83 / SGSC4696).